Here is a 250-residue protein sequence, read N- to C-terminus: Maleate isomerase (250 aa).

Residues Asn15, 80-82, Tyr137, and Asn167 each bind substrate; that span reads CLV. Catalysis depends on Cys80, which acts as the Nucleophile. An S-(2-succinyl)cysteine modification is found at Cys80. The active-site Proton donor is the Cys198. Residue 199–200 participates in substrate binding; sequence VQ.

It belongs to the maleate isomerase family. As to quaternary structure, homodimer.

The enzyme catalyses maleate = fumarate. It participates in cofactor degradation; nicotinate degradation. Functionally, catalyzes cis-trans isomerization of the C2-C3 double bond in maleate to yield fumarate in the aerobic nicotinate degradation pathway. The polypeptide is Maleate isomerase (Pseudomonas putida (strain ATCC 47054 / DSM 6125 / CFBP 8728 / NCIMB 11950 / KT2440)).